Here is a 571-residue protein sequence, read N- to C-terminus: Proline--tRNA ligase (571 aa).

It belongs to the class-II aminoacyl-tRNA synthetase family. ProS type 1 subfamily. Homodimer.

Its subcellular location is the cytoplasm. The enzyme catalyses tRNA(Pro) + L-proline + ATP = L-prolyl-tRNA(Pro) + AMP + diphosphate. Functionally, catalyzes the attachment of proline to tRNA(Pro) in a two-step reaction: proline is first activated by ATP to form Pro-AMP and then transferred to the acceptor end of tRNA(Pro). As ProRS can inadvertently accommodate and process non-cognate amino acids such as alanine and cysteine, to avoid such errors it has two additional distinct editing activities against alanine. One activity is designated as 'pretransfer' editing and involves the tRNA(Pro)-independent hydrolysis of activated Ala-AMP. The other activity is designated 'posttransfer' editing and involves deacylation of mischarged Ala-tRNA(Pro). The misacylated Cys-tRNA(Pro) is not edited by ProRS. This chain is Proline--tRNA ligase, found in Pseudomonas syringae pv. syringae (strain B728a).